A 226-amino-acid chain; its full sequence is Urease accessory protein UreF (226 aa).

The protein belongs to the UreF family. As to quaternary structure, ureD, UreF and UreG form a complex that acts as a GTP-hydrolysis-dependent molecular chaperone, activating the urease apoprotein by helping to assemble the nickel containing metallocenter of UreC. The UreE protein probably delivers the nickel.

It is found in the cytoplasm. Functionally, required for maturation of urease via the functional incorporation of the urease nickel metallocenter. The chain is Urease accessory protein UreF from Paraburkholderia xenovorans (strain LB400).